Consider the following 199-residue polypeptide: Acireductone dioxygenase 1 (199 aa).

Positions 99, 101, 105, and 144 each coordinate Fe(2+). Ni(2+) contacts are provided by histidine 99, histidine 101, glutamate 105, and histidine 144.

This sequence belongs to the acireductone dioxygenase (ARD) family. It depends on Fe(2+) as a cofactor. Requires Ni(2+) as cofactor.

It is found in the cytoplasm. The protein resides in the nucleus. The catalysed reaction is 1,2-dihydroxy-5-(methylsulfanyl)pent-1-en-3-one + O2 = 4-methylsulfanyl-2-oxobutanoate + formate + 2 H(+). The enzyme catalyses 1,2-dihydroxy-5-(methylsulfanyl)pent-1-en-3-one + O2 = 3-(methylsulfanyl)propanoate + CO + formate + 2 H(+). It participates in amino-acid biosynthesis; L-methionine biosynthesis via salvage pathway; L-methionine from S-methyl-5-thio-alpha-D-ribose 1-phosphate: step 5/6. Its function is as follows. Catalyzes 2 different reactions between oxygen and the acireductone 1,2-dihydroxy-3-keto-5-methylthiopentene (DHK-MTPene) depending upon the metal bound in the active site. Fe-containing acireductone dioxygenase (Fe-ARD) produces formate and 2-keto-4-methylthiobutyrate (KMTB), the alpha-ketoacid precursor of methionine in the methionine recycle pathway. Ni-containing acireductone dioxygenase (Ni-ARD) produces methylthiopropionate, carbon monoxide and formate, and does not lie on the methionine recycle pathway. In Arabidopsis thaliana (Mouse-ear cress), this protein is Acireductone dioxygenase 1 (ARD1).